The sequence spans 81 residues: Small ribosomal subunit protein bS20 (81 aa).

It belongs to the bacterial ribosomal protein bS20 family.

Binds directly to 16S ribosomal RNA. This Mycoplasma mycoides subsp. mycoides SC (strain CCUG 32753 / NCTC 10114 / PG1) protein is Small ribosomal subunit protein bS20.